The primary structure comprises 61 residues: Metallothionein-2B (61 aa).

Methionine 1 is modified (N-acetylmethionine). Residues 1–29 (MDPNCSCAAGGSCTCAGSCKCKDCRCTSC) are beta. Cysteine 5, cysteine 7, cysteine 13, cysteine 15, cysteine 19, cysteine 21, cysteine 24, cysteine 26, cysteine 29, cysteine 33, cysteine 34, cysteine 36, cysteine 37, cysteine 41, cysteine 44, cysteine 48, cysteine 50, cysteine 57, cysteine 59, and cysteine 60 together coordinate a divalent metal cation. The alpha stretch occupies residues 30 to 61 (KKSCCSCCPAGCARCAQGCICKGASDKCSCCA).

The protein belongs to the metallothionein superfamily. Type 1 family. In terms of assembly, monomer.

Functionally, metallothioneins have a high content of cysteine residues that bind various heavy metals; these proteins are transcriptionally regulated by both heavy metals and glucocorticoids. This is Metallothionein-2B (MT2B) from Sus scrofa (Pig).